A 354-amino-acid chain; its full sequence is Peptide chain release factor 1 (354 aa).

At Gln230 the chain carries N5-methylglutamine.

The protein belongs to the prokaryotic/mitochondrial release factor family. Methylated by PrmC. Methylation increases the termination efficiency of RF1.

Its subcellular location is the cytoplasm. Functionally, peptide chain release factor 1 directs the termination of translation in response to the peptide chain termination codons UAG and UAA. In Novosphingobium aromaticivorans (strain ATCC 700278 / DSM 12444 / CCUG 56034 / CIP 105152 / NBRC 16084 / F199), this protein is Peptide chain release factor 1.